Consider the following 67-residue polypeptide: Small, acid-soluble spore protein 2 (67 aa).

It belongs to the alpha/beta-type SASP family.

SASP are bound to spore DNA. They are double-stranded DNA-binding proteins that cause DNA to change to an a-like conformation. They protect the DNA backbone from chemical and enzymatic cleavage and are thus involved in dormant spore's high resistance to UV light. The polypeptide is Small, acid-soluble spore protein 2 (Su-2) (Sporosarcina ureae).